The following is a 156-amino-acid chain: MAKSKNHTTHNQSRKWHRNGIKKPRSQRYESLKGVDPKFLRNMRFAKKHNKKGLKKMQANNAKAVSARAEAIKALVKPQAVKPKMPKGSSRKLSRLAFIAHPKLGKKIRSYMAKGRRLCQPKPKVQTKAEAKAPAKAQAKAPAQAPKGAQAPVKAP.

The span at 1-26 (MAKSKNHTTHNQSRKWHRNGIKKPRS) shows a compositional bias: basic residues. Disordered stretches follow at residues 1–35 (MAKS…LKGV) and 116–156 (RRLC…VKAP). Residue Lys5 is modified to N6-methyllysine. Position 31 is a phosphoserine (Ser31). Position 33 is an N6-acetyllysine (Lys33). 2 tandem repeats follow at residues 129-136 (AEAKAPAK) and 137-144 (AQAKAPAQ). The segment at 129-144 (AEAKAPAKAQAKAPAQ) is 2 X 8 AA tandem repeats of A-X-A-K-A-P-A-[KQ]. Over residues 134-156 (PAKAQAKAPAQAPKGAQAPVKAP) the composition is skewed to low complexity.

This sequence belongs to the eukaryotic ribosomal protein eL29 family. Component of the large ribosomal subunit.

It localises to the cytoplasm. In terms of biological role, component of the large ribosomal subunit. The ribosome is a large ribonucleoprotein complex responsible for the synthesis of proteins in the cell. In Rattus norvegicus (Rat), this protein is Large ribosomal subunit protein eL29 (Rpl29).